A 178-amino-acid chain; its full sequence is ATP-dependent protease subunit HslV (178 aa).

Threonine 7 is a catalytic residue. The Na(+) site is built by glycine 162, cysteine 165, and threonine 168.

This sequence belongs to the peptidase T1B family. HslV subfamily. A double ring-shaped homohexamer of HslV is capped on each side by a ring-shaped HslU homohexamer. The assembly of the HslU/HslV complex is dependent on binding of ATP.

It is found in the cytoplasm. It carries out the reaction ATP-dependent cleavage of peptide bonds with broad specificity.. With respect to regulation, allosterically activated by HslU binding. Functionally, protease subunit of a proteasome-like degradation complex believed to be a general protein degrading machinery. The chain is ATP-dependent protease subunit HslV from Burkholderia mallei (strain ATCC 23344).